The sequence spans 165 residues: SsrA-binding protein (165 aa).

Over residues 135–158 (QAHDKRQDMARRDAQREVTRELGR) the composition is skewed to basic and acidic residues. The tract at residues 135 to 165 (QAHDKRQDMARRDAQREVTRELGRRVKGMTN) is disordered.

Belongs to the SmpB family.

The protein localises to the cytoplasm. Functionally, required for rescue of stalled ribosomes mediated by trans-translation. Binds to transfer-messenger RNA (tmRNA), required for stable association of tmRNA with ribosomes. tmRNA and SmpB together mimic tRNA shape, replacing the anticodon stem-loop with SmpB. tmRNA is encoded by the ssrA gene; the 2 termini fold to resemble tRNA(Ala) and it encodes a 'tag peptide', a short internal open reading frame. During trans-translation Ala-aminoacylated tmRNA acts like a tRNA, entering the A-site of stalled ribosomes, displacing the stalled mRNA. The ribosome then switches to translate the ORF on the tmRNA; the nascent peptide is terminated with the 'tag peptide' encoded by the tmRNA and targeted for degradation. The ribosome is freed to recommence translation, which seems to be the essential function of trans-translation. This chain is SsrA-binding protein, found in Mycolicibacterium gilvum (strain PYR-GCK) (Mycobacterium gilvum (strain PYR-GCK)).